The sequence spans 884 residues: Kinesin-like protein KIN-7C (884 aa).

The 323-residue stretch at 33–355 (RIQVLVRLRP…LLFGSCAKEV (323 aa)) folds into the Kinesin motor domain. 119-126 (GQTSSGKT) lines the ATP pocket. A coiled-coil region spans residues 364–435 (VMSDKALVKH…LQDLLQSVGD (72 aa)). Residues 434–530 (GDHDLNRQVQ…VNSRHSRPSG (97 aa)) are disordered. Residues 449 to 460 (RSPPSVGMPPSV) show a composition bias toward low complexity. Over residues 461–483 (SRDDSSQVSHDDSDLYKEVRCIE) the composition is skewed to basic and acidic residues. A compositionally biased stretch (polar residues) spans 498-523 (GESSSPQDSNMNSGLHGNDSNASVNS).

The protein belongs to the TRAFAC class myosin-kinesin ATPase superfamily. Kinesin family. KIN-7 subfamily.

This Oryza sativa subsp. japonica (Rice) protein is Kinesin-like protein KIN-7C.